The following is a 607-amino-acid chain: Coronin-like protein cor-1 (607 aa).

3 WD repeats span residues 77 to 117, 127 to 167, and 170 to 209; these read AHKA…LNRN, GHQK…ALLE, and GHPDQIWSINFNFDGSQFVTTCKDKKIRILDSHTGEVVHE. Positions 415 to 564 are disordered; that stretch reads PTAAESVPTQ…VSAASDVGHV (150 aa). Residues 424 to 436 are compositionally biased toward low complexity; sequence QSYSERPPSSQQP. Over residues 437–447 the composition is skewed to pro residues; that stretch reads SPRPSASPRPR. Basic and acidic residues-rich tracts occupy residues 473–489 and 517–533; these read SRTEIPPKEESKVDPMK and AAAELERIKRDQSRTAD. Low complexity predominate over residues 544 to 559; sequence SSRASASPRGSVSAAS. The stretch at 563 to 602 forms a coiled coil; that stretch reads HVPQNMDELLEDLMKMKAVLRQHERRIRMLEEEIADRNMS.

It belongs to the WD repeat coronin family.

The protein localises to the cytoplasm. It localises to the cytoskeleton. Functionally, required to direct the migration of Q neuroblasts along the anterior axis of the body during larval development. This is dependent on its asymmetric expression in Q neuroblasts. The polypeptide is Coronin-like protein cor-1 (cor-1) (Caenorhabditis elegans).